The chain runs to 29 residues: DFKDWMKTAGEWLKKKGPGILKAAMAAAT.

As to expression, expressed by the venom gland.

It localises to the secreted. Its function is as follows. Has activity against some Gram-positive bacteria and S.cerevisiae. Has a non-hemolytic activity. This chain is M-poneritoxin-Ng3d, found in Neoponera goeldii (Ponerine ant).